Consider the following 692-residue polypeptide: Elongation factor G (692 aa).

Residues 8-282 form the tr-type G domain; that stretch reads ENTRNIGIMA…AVLDYLPSPL (275 aa). Residues 17–24, 81–85, and 135–138 contribute to the GTP site; these read AHIDAGKT, DTPGH, and NKMD.

It belongs to the TRAFAC class translation factor GTPase superfamily. Classic translation factor GTPase family. EF-G/EF-2 subfamily.

It is found in the cytoplasm. Catalyzes the GTP-dependent ribosomal translocation step during translation elongation. During this step, the ribosome changes from the pre-translocational (PRE) to the post-translocational (POST) state as the newly formed A-site-bound peptidyl-tRNA and P-site-bound deacylated tRNA move to the P and E sites, respectively. Catalyzes the coordinated movement of the two tRNA molecules, the mRNA and conformational changes in the ribosome. In Halalkalibacterium halodurans (strain ATCC BAA-125 / DSM 18197 / FERM 7344 / JCM 9153 / C-125) (Bacillus halodurans), this protein is Elongation factor G (fusA).